We begin with the raw amino-acid sequence, 163 residues long: Putative MucR family transcriptional regulatory protein RA0938 (163 aa).

The protein belongs to the ros/MucR family.

This chain is Putative MucR family transcriptional regulatory protein RA0938, found in Rhizobium meliloti (strain 1021) (Ensifer meliloti).